The chain runs to 208 residues: Small ribosomal subunit protein uS4 (208 aa).

The region spanning 98 to 158 (RRLDNVVYRL…EKSRKIACIN (61 aa)) is the S4 RNA-binding domain.

Belongs to the universal ribosomal protein uS4 family. Part of the 30S ribosomal subunit. Contacts protein S5. The interaction surface between S4 and S5 is involved in control of translational fidelity.

In terms of biological role, one of the primary rRNA binding proteins, it binds directly to 16S rRNA where it nucleates assembly of the body of the 30S subunit. Functionally, with S5 and S12 plays an important role in translational accuracy. The polypeptide is Small ribosomal subunit protein uS4 (Geobacter sulfurreducens (strain ATCC 51573 / DSM 12127 / PCA)).